A 448-amino-acid chain; its full sequence is uncharacterized protein (448 aa).

In terms of domain architecture, uDENN spans 4–155 (QAIVLATFDA…SAVNLEFDSL (152 aa)). The 144-residue stretch at 183–326 (LDHLGPAFYC…FKGLSRYLSF (144 aa)) folds into the cDENN domain. The 101-residue stretch at 328-428 (GESSWGLTTY…WQYGKYFWLR (101 aa)) folds into the dDENN domain. A helical transmembrane segment spans residues 425 to 447 (FWLRRVSLIFLASTCFLFILWKL).

It is found in the golgi apparatus membrane. Its subcellular location is the endoplasmic reticulum membrane. This is an uncharacterized protein from Schizosaccharomyces pombe (strain 972 / ATCC 24843) (Fission yeast).